Reading from the N-terminus, the 177-residue chain is Peptidyl-tRNA hydrolase (177 aa).

Tyr12 contributes to the tRNA binding site. The active-site Proton acceptor is His17. The tRNA site is built by Phe63, Asn65, and Asn111.

The protein belongs to the PTH family. In terms of assembly, monomer.

It localises to the cytoplasm. It carries out the reaction an N-acyl-L-alpha-aminoacyl-tRNA + H2O = an N-acyl-L-amino acid + a tRNA + H(+). Functionally, hydrolyzes ribosome-free peptidyl-tRNAs (with 1 or more amino acids incorporated), which drop off the ribosome during protein synthesis, or as a result of ribosome stalling. Catalyzes the release of premature peptidyl moieties from peptidyl-tRNA molecules trapped in stalled 50S ribosomal subunits, and thus maintains levels of free tRNAs and 50S ribosomes. The chain is Peptidyl-tRNA hydrolase from Buchnera aphidicola subsp. Acyrthosiphon pisum (strain 5A).